Reading from the N-terminus, the 128-residue chain is Small ribosomal subunit protein uS13 (128 aa).

Positions 98-128 (VRGQRTRTNARTRKGPRPRIGVKKKGKQAGS) are disordered. Residues 101-128 (QRTRTNARTRKGPRPRIGVKKKGKQAGS) show a composition bias toward basic residues.

Belongs to the universal ribosomal protein uS13 family. As to quaternary structure, part of the 30S ribosomal subunit. Forms a loose heterodimer with protein S19. Forms two bridges to the 50S subunit in the 70S ribosome.

In terms of biological role, located at the top of the head of the 30S subunit, it contacts several helices of the 16S rRNA. In the 70S ribosome it contacts the 23S rRNA (bridge B1a) and protein L5 of the 50S subunit (bridge B1b), connecting the 2 subunits; these bridges are implicated in subunit movement. Contacts the tRNAs in the A and P-sites. This chain is Small ribosomal subunit protein uS13, found in Thermomicrobium roseum (strain ATCC 27502 / DSM 5159 / P-2).